Consider the following 321-residue polypeptide: MRILPKSGGGALCLLFVFALCSVAHSLSCDVKVVGDVEVIGYSEISKIKIPNAFSGLRVTIECKAADSKGHFVTRGSGEVDETGKFHLNIPHDIVGDDGTLKEACYAHLQSAFGNPCPAHDGLEASKIVFLSKSGQNHVLGLKKSLKFSPEVCISKFFWHMPKFPLPPPLNLPPLTFPKIKKPCPPIYKPPVVIPKKPCPPKIAHKPIYKPPVPIYKPPVPIYKPPVVIPKKPCPPKIHKPIYKPPVPIYKPPVVIPKKTFPPLHKPIYKHPVPIYKPIFKPPVVVIPKKPCPPLPKFPHFPPKYIPHPKFGKWPPFPSHP.

Residues 1–26 (MRILPKSGGGALCLLFVFALCSVAHS) form the signal peptide. 24 consecutive repeat copies span residues 168–172 (PPLNL), 173–176 (PPLT), 177–181 (FPKIK), 185–189 (PPIYK), 190–194 (PPVVI), 198–202 (PCPPK), 207–211 (PIYKP), 212–217 (PVPIYK), 218–223 (PPVPIY), 225–229 (PPVVI), 234–238 (CPPKI), 240–244 (KPIYK), 245–251 (PPVPIYK), 252–256 (PPVVI), 262–266 (PPLHK), 267–271 (PIYKH), 272–276 (PVPIY), 277–281 (KPIFK), 282–286 (PPVVV), 288–292 (PKKPC), 293–297 (PPLPK), 298–302 (FPHFP), 303–307 (PKYIP), and 315–319 (PPFPS). Positions 168-319 (PPLNLPPLTF…KFGKWPPFPS (152 aa)) are 24 X 5 AA approximate repeats.

The protein belongs to the plant proline-rich protein superfamily. As to expression, mostly expressed in aerial organs, particularly in expanding leaves, stems, flowers, and siliques.

The protein localises to the secreted. The protein resides in the cell wall. The polypeptide is Proline-rich protein 2 (PRP2) (Arabidopsis thaliana (Mouse-ear cress)).